A 255-amino-acid chain; its full sequence is Type III pantothenate kinase (255 aa).

Position 6 to 13 (6 to 13) interacts with ATP; the sequence is DVGNTHIV. Substrate-binding positions include Y100 and 107–110; that span reads GADR. D109 serves as the catalytic Proton acceptor. A K(+)-binding site is contributed by D129. T132 is an ATP binding site. A substrate-binding site is contributed by T184.

The protein belongs to the type III pantothenate kinase family. In terms of assembly, homodimer. NH4(+) serves as cofactor. K(+) is required as a cofactor.

It is found in the cytoplasm. The enzyme catalyses (R)-pantothenate + ATP = (R)-4'-phosphopantothenate + ADP + H(+). Its pathway is cofactor biosynthesis; coenzyme A biosynthesis; CoA from (R)-pantothenate: step 1/5. Its function is as follows. Catalyzes the phosphorylation of pantothenate (Pan), the first step in CoA biosynthesis. This chain is Type III pantothenate kinase, found in Ruminiclostridium cellulolyticum (strain ATCC 35319 / DSM 5812 / JCM 6584 / H10) (Clostridium cellulolyticum).